We begin with the raw amino-acid sequence, 92 residues long: RNA-binding protein Hfq (92 aa).

Residues 9–68 (DPFLNALRRERVPVSVYLVNGIKLQGTIESFDQFVVLLRNTVSQMVYKHAISTVVPARNV) form the Sm domain. Positions 72-92 (PGGGYVQSNENNQAEDDDVEQ) are disordered.

The protein belongs to the Hfq family. Homohexamer.

Functionally, RNA chaperone that binds small regulatory RNA (sRNAs) and mRNAs to facilitate mRNA translational regulation in response to envelope stress, environmental stress and changes in metabolite concentrations. Also binds with high specificity to tRNAs. In Xanthomonas campestris pv. campestris (strain 8004), this protein is RNA-binding protein Hfq.